The primary structure comprises 155 residues: SsrA-binding protein (155 aa).

It belongs to the SmpB family.

The protein resides in the cytoplasm. In terms of biological role, required for rescue of stalled ribosomes mediated by trans-translation. Binds to transfer-messenger RNA (tmRNA), required for stable association of tmRNA with ribosomes. tmRNA and SmpB together mimic tRNA shape, replacing the anticodon stem-loop with SmpB. tmRNA is encoded by the ssrA gene; the 2 termini fold to resemble tRNA(Ala) and it encodes a 'tag peptide', a short internal open reading frame. During trans-translation Ala-aminoacylated tmRNA acts like a tRNA, entering the A-site of stalled ribosomes, displacing the stalled mRNA. The ribosome then switches to translate the ORF on the tmRNA; the nascent peptide is terminated with the 'tag peptide' encoded by the tmRNA and targeted for degradation. The ribosome is freed to recommence translation, which seems to be the essential function of trans-translation. The protein is SsrA-binding protein of Streptococcus equi subsp. equi (strain 4047).